A 228-amino-acid chain; its full sequence is U1 small nuclear ribonucleoprotein C-2 (228 aa).

The Matrin-type zinc finger occupies 4 to 36 (YYCDYCDTYLTHDSPSVRKQHNAGYKHKANVRT). The segment at 105–228 (PGVRPPILPA…SYALPSEGNH (124 aa)) is disordered. 2 stretches are compositionally biased toward pro residues: residues 107–156 (VRPP…PPGS) and 164–175 (LPRPPTLPPPTS). The span at 178–190 (PGAPIPNSAAPPA) shows a compositional bias: low complexity. Residues 196 to 214 (PPAPAGPTSGAPPAPPTAP) are compositionally biased toward pro residues.

It belongs to the U1 small nuclear ribonucleoprotein C family. U1 snRNP is composed of the 7 core Sm proteins B/B', D1, D2, D3, E, F and G that assemble in a heptameric protein ring on the Sm site of the small nuclear RNA to form the core snRNP, and at least 3 U1 snRNP-specific proteins U1-70K, U1-A and U1-C. U1-C interacts with U1 snRNA and the 5' splice-site region of the pre-mRNA.

It localises to the nucleus. Its function is as follows. Component of the spliceosomal U1 snRNP, which is essential for recognition of the pre-mRNA 5' splice-site and the subsequent assembly of the spliceosome. U1-C is directly involved in initial 5' splice-site recognition for both constitutive and regulated alternative splicing. The interaction with the 5' splice-site seems to precede base-pairing between the pre-mRNA and the U1 snRNA. Stimulates commitment or early (E) complex formation by stabilizing the base pairing of the 5' end of the U1 snRNA and the 5' splice-site region. This is U1 small nuclear ribonucleoprotein C-2 from Sorghum bicolor (Sorghum).